A 55-amino-acid polypeptide reads, in one-letter code: Large ribosomal subunit protein bL33 (55 aa).

The protein belongs to the bacterial ribosomal protein bL33 family.

The polypeptide is Large ribosomal subunit protein bL33 (Deinococcus geothermalis (strain DSM 11300 / CIP 105573 / AG-3a)).